The sequence spans 108 residues: Small ribosomal subunit protein eS25y (108 aa).

The interval methionine 1–lysine 36 is disordered. Residues lysine 22–glycine 31 are compositionally biased toward basic residues.

The protein belongs to the eukaryotic ribosomal protein eS25 family.

The sequence is that of Small ribosomal subunit protein eS25y (RPS25B) from Arabidopsis thaliana (Mouse-ear cress).